The chain runs to 145 residues: uncharacterized protein (145 aa).

The interval 71–95 (GARGRGRTYTKGGSSRSPASWAEQG) is disordered.

This is an uncharacterized protein from Homo sapiens (Human).